We begin with the raw amino-acid sequence, 179 residues long: MNRLKEKFQKEITPALMSKFNYKSVMQVPKIEKIVINTGVGDAVSNSKALDNAVEELTQIAGQKPVVTRAKKSIAGFRLREGMPIGAKVTLRGEQMYEFFDKLVSVSLPRVRDFRGVSKKSFDGRGNYTLGVKEQLIFPEIDYDKVSKVRGMDIVIVTTANTDEEARELLTQFGMPFQK.

It belongs to the universal ribosomal protein uL5 family. As to quaternary structure, part of the 50S ribosomal subunit; part of the 5S rRNA/L5/L18/L25 subcomplex. Contacts the 5S rRNA and the P site tRNA. Forms a bridge to the 30S subunit in the 70S ribosome.

This is one of the proteins that bind and probably mediate the attachment of the 5S RNA into the large ribosomal subunit, where it forms part of the central protuberance. In the 70S ribosome it contacts protein S13 of the 30S subunit (bridge B1b), connecting the 2 subunits; this bridge is implicated in subunit movement. Contacts the P site tRNA; the 5S rRNA and some of its associated proteins might help stabilize positioning of ribosome-bound tRNAs. In Bacillus cereus (strain Q1), this protein is Large ribosomal subunit protein uL5.